The following is a 253-amino-acid chain: uncharacterized protein (253 aa).

This is an uncharacterized protein from Campylobacter jejuni subsp. jejuni serotype O:2 (strain ATCC 700819 / NCTC 11168).